A 640-amino-acid polypeptide reads, in one-letter code: Protein argonaute (640 aa).

Positions 1–100 are N-terminal domain; that stretch reads MYLNLYEIKI…YIKKKFIDNN (100 aa). The segment at 101 to 153 is linker L1; the sequence is FYYKRGNNYISINDKFPLDSNTNVNAHLTYKIKLYKINERYYISVLPKFTFLS. The tract at residues 154–209 is PAZ domain; it reads DKPALESPIKSTYLFNIKSGKTFPYISGLNGVLKIDLGENGIKEVLFPENYYFNFT. The tract at residues 210–291 is linker L2; the sequence is SKEAEKFGFS…KYSFYKNDQK (82 aa). The tract at residues 292-423 is mid domain; sequence IKIAFFFSSK…YVYKMGNFIP (132 aa). Residues 424 to 640 form a PIWI domain region; sequence ECQPYVIRNL…EWKLYIPYMK (217 aa). Residues aspartate 445, glutamate 481, aspartate 515, and asparagine 623 contribute to the active site. Aspartate 445 is a Mn(2+) binding site. Positions 515 and 623 each coordinate Mn(2+).

The protein belongs to the argonaute family. Long pAgo subfamily. Mn(2+) is required as a cofactor.

Functionally, a highly versatile argonaute that uses 5'-phospho- and 5'-OH- guide RNA (gRNA) or DNA (gDNA) to cleave target RNA or ssDNA (tDNA) in all possible combinations; has no detectable activity in the absence of guide. Uses short guide sequences (18-21 nucleotides (nt) on average) to bind complementary target nucleic acids resulting in target cleavage in a site-specific manner. Using 5'-phospho-gRNA or 5'-OH-gRNA the cleavage site is 10 nt downstream of the target residue base-paired with the 5'-end of the gRNA, using 5'-phospho-gDNA the cleavage site is 11 nucleotides (nt) downstream, while with 5'-OH-gDNA the cleavage site is 9 nt downstream. The polypeptide is Protein argonaute (Marinitoga hydrogenitolerans (strain DSM 16785 / JCM 12826 / AT1271)).